Here is a 468-residue protein sequence, read N- to C-terminus: ATP synthase subunit beta (468 aa).

ATP is bound at residue glycine 155–threonine 162.

Belongs to the ATPase alpha/beta chains family. As to quaternary structure, F-type ATPases have 2 components, CF(1) - the catalytic core - and CF(0) - the membrane proton channel. CF(1) has five subunits: alpha(3), beta(3), gamma(1), delta(1), epsilon(1). CF(0) has three main subunits: a(1), b(2) and c(9-12). The alpha and beta chains form an alternating ring which encloses part of the gamma chain. CF(1) is attached to CF(0) by a central stalk formed by the gamma and epsilon chains, while a peripheral stalk is formed by the delta and b chains.

The protein resides in the cell membrane. The catalysed reaction is ATP + H2O + 4 H(+)(in) = ADP + phosphate + 5 H(+)(out). Functionally, produces ATP from ADP in the presence of a proton gradient across the membrane. The catalytic sites are hosted primarily by the beta subunits. The polypeptide is ATP synthase subunit beta (Streptococcus equi subsp. zooepidemicus (strain H70)).